Reading from the N-terminus, the 179-residue chain is Large ribosomal subunit protein uL5 (179 aa).

It belongs to the universal ribosomal protein uL5 family. Part of the 50S ribosomal subunit; part of the 5S rRNA/L5/L18/L25 subcomplex. Contacts the 5S rRNA and the P site tRNA. Forms a bridge to the 30S subunit in the 70S ribosome.

In terms of biological role, this is one of the proteins that bind and probably mediate the attachment of the 5S RNA into the large ribosomal subunit, where it forms part of the central protuberance. In the 70S ribosome it contacts protein S13 of the 30S subunit (bridge B1b), connecting the 2 subunits; this bridge is implicated in subunit movement. Contacts the P site tRNA; the 5S rRNA and some of its associated proteins might help stabilize positioning of ribosome-bound tRNAs. This Vibrio parahaemolyticus serotype O3:K6 (strain RIMD 2210633) protein is Large ribosomal subunit protein uL5.